The primary structure comprises 455 residues: MGAMAQNPPNLRPDLAPRLVIDSPRREGQPTIGMVSLGCPKALVDSERILTRLRAEGYAISPDYAGADAVIVNTCGFLDSAKAESLEAIGEALRENGRVIVTGCLGAEPDYVTGAHPKVLAVTGPHQYEQVLDAVHGAVPPAPDPFVDLLPATGVRLTPRHFSYLKISEGCNHTCRFCIIPDMRGRLASRPERAVLREAEKLVEAGVRELLVISQDTSAYGTDWKGPEKFPILPLARELGRLGAWVRLHYVYPYPHVRELIPLMAEGLVLPYLDIPFQHAHPEVLKRMARPAAAARTLDEIAAWRRDCPEITLRSTFIVGYPGETEAEFQTLLDWLDEAQLDRVGCFQYENVAGARSNALPDHVAPEVKQERWDRFMEKAQAISEAKLAAKVGRRIEVIVDEVDEDGATCRTKADAPEIDGNLFIDEGFKGLAPGDILTVEVEEAGEYDLWGRPV.

One can recognise an MTTase N-terminal domain in the interval 30–140; sequence PTIGMVSLGC…VLDAVHGAVP (111 aa). Residues Cys39, Cys75, Cys104, Cys171, Cys175, and Cys178 each coordinate [4Fe-4S] cluster. The Radical SAM core domain occupies 157 to 386; it reads LTPRHFSYLK…MEKAQAISEA (230 aa). A TRAM domain is found at 389–455; that stretch reads AAKVGRRIEV…GEYDLWGRPV (67 aa).

It belongs to the methylthiotransferase family. RimO subfamily. It depends on [4Fe-4S] cluster as a cofactor.

It localises to the cytoplasm. The catalysed reaction is L-aspartate(89)-[ribosomal protein uS12]-hydrogen + (sulfur carrier)-SH + AH2 + 2 S-adenosyl-L-methionine = 3-methylsulfanyl-L-aspartate(89)-[ribosomal protein uS12]-hydrogen + (sulfur carrier)-H + 5'-deoxyadenosine + L-methionine + A + S-adenosyl-L-homocysteine + 2 H(+). Catalyzes the methylthiolation of an aspartic acid residue of ribosomal protein uS12. This Cereibacter sphaeroides (strain ATCC 17029 / ATH 2.4.9) (Rhodobacter sphaeroides) protein is Ribosomal protein uS12 methylthiotransferase RimO.